The sequence spans 63 residues: MLILTRKVGESVLIGDDISITVLSVRGNQVKLGVEAPKEVSVHREEIYQRIKQTKDEPYLGSS.

This sequence belongs to the CsrA/RsmA family. Homodimer; the beta-strands of each monomer intercalate to form a hydrophobic core, while the alpha-helices form wings that extend away from the core.

It is found in the cytoplasm. Functionally, a key translational regulator that binds mRNA to regulate translation initiation and/or mRNA stability. Mediates global changes in gene expression, shifting from rapid growth to stress survival by linking envelope stress, the stringent response and the catabolite repression systems. Usually binds in the 5'-UTR; binding at or near the Shine-Dalgarno sequence prevents ribosome-binding, repressing translation, binding elsewhere in the 5'-UTR can activate translation and/or stabilize the mRNA. Its function is antagonized by small RNA(s). This chain is Translational regulator CsrA, found in Haemophilus influenzae (strain 86-028NP).